The sequence spans 558 residues: Acid-sensing ion channel 4-B (558 aa).

At 1 to 71 (MPIEFVCKIK…TSERLGFRQT (71 aa)) the chain is on the cytoplasmic side. The helical transmembrane segment at 72–92 (LWGLALLVSLGLFLYQATWSA) threads the bilayer. At 93–433 (ATYLERPHLA…ETIEQKKAYD (341 aa)) the chain is on the extracellular side. 2 cysteine pairs are disulfide-bonded: Cys120–Cys204 and Cys182–Cys189. N-linked (GlcNAc...) asparagine glycans are attached at residues Asn140, Asn183, Asn188, Asn210, and Asn245. 5 disulfides stabilise this stretch: Cys298–Cys373, Cys317–Cys369, Cys321–Cys367, Cys330–Cys351, and Cys332–Cys344. A glycan (N-linked (GlcNAc...) asparagine) is linked at Asn374. A helical membrane pass occupies residues 434-454 (IAGLLGDIGGQMGLFIGASIL). The GAS motif; ion selectivity filter signature appears at 450–452 (GAS). Residues 455–558 (TILEILDYIY…QQAVQQDFAC (104 aa)) are Cytoplasmic-facing.

This sequence belongs to the amiloride-sensitive sodium channel (TC 1.A.6) family. ASIC4 subfamily. As to quaternary structure, homotrimer. Heterotrimer; with other ASIC proteins producing functional channels. In terms of tissue distribution, expressed in central nervous system.

Its subcellular location is the cell membrane. It catalyses the reaction Na(+)(in) = Na(+)(out). Functionally, does not exhibit measurable stand-alone pH-gated sodium channel activity but may form pH-gated heterotrimeric sodium channels. The chain is Acid-sensing ion channel 4-B from Danio rerio (Zebrafish).